We begin with the raw amino-acid sequence, 491 residues long: Adenylosuccinate synthetase, chloroplastic (491 aa).

Residues 78–84 and 106–108 each bind GTP; these read GDEGKGK and GHT. The active-site Proton acceptor is the Asp79. Positions 79 and 106 each coordinate Mg(2+). Residues 79–82, 104–107, Thr196, Arg210, Gln290, Thr305, and Arg369 contribute to the IMP site; these read DEGK and NAGH. The active-site Proton donor is His107. Residue 365-371 coordinates substrate; the sequence is TTTGRPR. GTP-binding positions include Arg371, 397–399, and 480–482; these read KLD and GIG.

It belongs to the adenylosuccinate synthetase family. In terms of assembly, homodimer. It depends on Mg(2+) as a cofactor.

The protein resides in the plastid. The protein localises to the chloroplast. It catalyses the reaction IMP + L-aspartate + GTP = N(6)-(1,2-dicarboxyethyl)-AMP + GDP + phosphate + 2 H(+). It functions in the pathway purine metabolism; AMP biosynthesis via de novo pathway; AMP from IMP: step 1/2. Plays an important role in the de novo pathway and in the salvage pathway of purine nucleotide biosynthesis. Catalyzes the first committed step in the biosynthesis of AMP from IMP. The chain is Adenylosuccinate synthetase, chloroplastic from Populus trichocarpa (Western balsam poplar).